The primary structure comprises 404 residues: Nicotinate phosphoribosyltransferase (404 aa).

A Phosphohistidine; by autocatalysis modification is found at H225.

This sequence belongs to the NAPRTase family. Transiently phosphorylated on a His residue during the reaction cycle. Phosphorylation strongly increases the affinity for substrates and increases the rate of nicotinate D-ribonucleotide production. Dephosphorylation regenerates the low-affinity form of the enzyme, leading to product release.

The enzyme catalyses nicotinate + 5-phospho-alpha-D-ribose 1-diphosphate + ATP + H2O = nicotinate beta-D-ribonucleotide + ADP + phosphate + diphosphate. It participates in cofactor biosynthesis; NAD(+) biosynthesis; nicotinate D-ribonucleotide from nicotinate: step 1/1. Catalyzes the synthesis of beta-nicotinate D-ribonucleotide from nicotinate and 5-phospho-D-ribose 1-phosphate at the expense of ATP. This chain is Nicotinate phosphoribosyltransferase, found in Methanosarcina acetivorans (strain ATCC 35395 / DSM 2834 / JCM 12185 / C2A).